The primary structure comprises 733 residues: Hypermethylated in cancer 1 protein (733 aa).

In terms of domain architecture, BTB spans 47–110 (CDVIIVVQNA…IYTGRLADGA (64 aa)). The interval 154 to 315 (KYCHLRGGGG…PFRGGSGSPG (162 aa)) is mediates HDAC-dependent transcriptional repression. Residue arginine 159 is modified to Omega-N-methylarginine. The interval 189–209 (YPSPVGPPPPPAAEPPSGPEA) is disordered. Pro residues predominate over residues 192–206 (PVGPPPPPAAEPPSG). The residue at position 237 (serine 237) is a Phosphoserine. The segment at 241–247 (GLDLSKK) is interaction with CTBP1. The segment at 241–421 (GLDLSKKSPP…PGGHLEGYPC (181 aa)) is disordered. The residue at position 248 (serine 248) is a Phosphoserine. Residues 284–293 (LALPSLPPLP) show a composition bias toward pro residues. Lysine 333 is modified (N6-acetyllysine; alternate). Lysine 333 participates in a covalent cross-link: Glycyl lysine isopeptide (Lys-Gly) (interchain with G-Cter in SUMO); alternate. Residues 344-361 (ELGRERGSPSERCEERGG) are compositionally biased toward basic and acidic residues. Residue serine 366 is modified to Phosphoserine. A compositionally biased stretch (pro residues) spans 368-380 (GGPPLGLAPPPRY). 5 consecutive C2H2-type zinc fingers follow at residues 439–459 (CIPC…VEAH), 509–529 (CASC…EKTH), 537–557 (CTIC…MRSH), 565–585 (CDAC…MRIH), and 593–613 (CQVC…MKMH). Position 704 is a phosphoserine (serine 704).

This sequence belongs to the krueppel C2H2-type zinc-finger protein family. Hic subfamily. Self-associates. Interacts with HIC2. Interacts with CTBP1 and CTBP2. Interacts with TCF7L2 and ARID1A. Interacts with MTA1 and MBD3; indicative for an association with the NuRD complex. Interacts with SIRT1. Post-translationally, acetylated on several residues, including Lys-333. Lys-333 is deacetylated by SIRT1. Sumoylated on Lys-333 by a PIAS family member, which enhances interaction with MTA1, positively regulates transcriptional repression activity and is enhanced by HDAC4. Ubiquitously expressed with highest levels found in lung, colon, prostate, thymus, testis and ovary. Expression is absent or decreased in many tumor cells.

The protein localises to the nucleus. Functionally, transcriptional repressor. Recognizes and binds to the consensus sequence '5-[CG]NG[CG]GGGCA[CA]CC-3'. May act as a tumor suppressor. Involved in development of head, face, limbs and ventral body wall. Involved in down-regulation of SIRT1 and thereby is involved in regulation of p53/TP53-dependent apoptotic DNA-damage responses. The specific target gene promoter association seems to be depend on corepressors, such as CTBP1 or CTBP2 and MTA1. In cooperation with MTA1 (indicative for an association with the NuRD complex) represses transcription from CCND1/cyclin-D1 and CDKN1C/p57Kip2 specifically in quiescent cells. Involved in regulation of the Wnt signaling pathway probably by association with TCF7L2 and preventing TCF7L2 and CTNNB1 association with promoters of TCF-responsive genes. Seems to repress transcription from E2F1 and ATOH1 which involves ARID1A, indicative for the participation of a distinct SWI/SNF-type chromatin-remodeling complex. Probably represses transcription of ACKR3, FGFBP1 and EFNA1. The chain is Hypermethylated in cancer 1 protein (HIC1) from Homo sapiens (Human).